The sequence spans 314 residues: 4-hydroxy-3-methylbut-2-enyl diphosphate reductase (314 aa).

Residue Cys12 coordinates [4Fe-4S] cluster. 2 residues coordinate (2E)-4-hydroxy-3-methylbut-2-enyl diphosphate: His41 and His74. The dimethylallyl diphosphate site is built by His41 and His74. His41 and His74 together coordinate isopentenyl diphosphate. Position 96 (Cys96) interacts with [4Fe-4S] cluster. His124 provides a ligand contact to (2E)-4-hydroxy-3-methylbut-2-enyl diphosphate. His124 is a binding site for dimethylallyl diphosphate. Position 124 (His124) interacts with isopentenyl diphosphate. Glu126 (proton donor) is an active-site residue. Residue Thr168 participates in (2E)-4-hydroxy-3-methylbut-2-enyl diphosphate binding. Cys198 serves as a coordination point for [4Fe-4S] cluster. Ser226, Ser227, Asn228, and Ser270 together coordinate (2E)-4-hydroxy-3-methylbut-2-enyl diphosphate. Residues Ser226, Ser227, Asn228, and Ser270 each coordinate dimethylallyl diphosphate. Isopentenyl diphosphate contacts are provided by Ser226, Ser227, Asn228, and Ser270.

Belongs to the IspH family. [4Fe-4S] cluster serves as cofactor.

The catalysed reaction is isopentenyl diphosphate + 2 oxidized [2Fe-2S]-[ferredoxin] + H2O = (2E)-4-hydroxy-3-methylbut-2-enyl diphosphate + 2 reduced [2Fe-2S]-[ferredoxin] + 2 H(+). It catalyses the reaction dimethylallyl diphosphate + 2 oxidized [2Fe-2S]-[ferredoxin] + H2O = (2E)-4-hydroxy-3-methylbut-2-enyl diphosphate + 2 reduced [2Fe-2S]-[ferredoxin] + 2 H(+). It functions in the pathway isoprenoid biosynthesis; dimethylallyl diphosphate biosynthesis; dimethylallyl diphosphate from (2E)-4-hydroxy-3-methylbutenyl diphosphate: step 1/1. The protein operates within isoprenoid biosynthesis; isopentenyl diphosphate biosynthesis via DXP pathway; isopentenyl diphosphate from 1-deoxy-D-xylulose 5-phosphate: step 6/6. Functionally, catalyzes the conversion of 1-hydroxy-2-methyl-2-(E)-butenyl 4-diphosphate (HMBPP) into a mixture of isopentenyl diphosphate (IPP) and dimethylallyl diphosphate (DMAPP). Acts in the terminal step of the DOXP/MEP pathway for isoprenoid precursor biosynthesis. The protein is 4-hydroxy-3-methylbut-2-enyl diphosphate reductase of Pseudomonas aeruginosa (strain ATCC 15692 / DSM 22644 / CIP 104116 / JCM 14847 / LMG 12228 / 1C / PRS 101 / PAO1).